A 420-amino-acid chain; its full sequence is Protein TabA (420 aa).

The residue at position 57 (Lys-57) is an N6-(pyridoxal phosphate)lysine.

It belongs to the Orn/Lys/Arg decarboxylase class-II family. It depends on pyridoxal 5'-phosphate as a cofactor.

Involved in tabtoxin production and pathogenicity. This chain is Protein TabA (tabA), found in Pseudomonas amygdali pv. tabaci (Pseudomonas syringae pv. tabaci).